A 300-amino-acid chain; its full sequence is Iron-dependent extradiol dioxygenase (300 aa).

VOC domains lie at 5 to 120 (SLGY…VFHG) and 142 to 270 (GMGH…FGCE). His-145 is a Fe cation binding site. Substrate contacts are provided by His-200, His-215, Asp-250, and Tyr-256. His-215 is a binding site for Fe cation. Glu-266 provides a ligand contact to Fe cation.

It belongs to the extradiol ring-cleavage dioxygenase family. Homodimer, but may form a homooctamer. Requires Fe(2+) as cofactor.

The catalysed reaction is 3,4-dihydroxy-9,10-secoandrosta-1,3,5(10)-triene-9,17-dione + O2 = (1E,2Z)-3-hydroxy-5,9,17-trioxo-4,5:9,10-disecoandrosta-1(10),2-dien-4-oate + H(+). Its pathway is steroid metabolism; cholesterol metabolism. Functionally, catalyzes the meta-cleavage of 3,4-dihydroxy-9,10-seconandrost-1,3,5(10)-triene-9,17-dione (3,4-DHSA) to produce 4,5-9,10-diseco-3-hydroxy-5,9,17-trioxoandrosta-1(10),2-diene-4-oic acid (4,9-DSHA). In Mycobacterium tuberculosis (strain CDC 1551 / Oshkosh), this protein is Iron-dependent extradiol dioxygenase (hsaC).